A 369-amino-acid polypeptide reads, in one-letter code: MAPIKTAVLGTGMSAFIFHYPFLKALPNHFEVYAAWERRATSTESKARAAFPNVKVYTKLDELLADSNIELVVISLPPNVHYEVVSQALNAGKHVLCEKPFTPTYGEAKELFDLAKSKNLMLTVYQNRRFDGDFLTAKECIENGRLGEVVQFESHIDRFRLFRKGNWKDVPNPGCGLVYDLGSHLIDQAITLFGTPHSVTAKLESQRQIPPLEVEDCFRIVLHYLPQEGRLPLDVIVCSSSISCGLDMRYIIKGTRGSFLKFGIDPQESQLNEGMSPMDPGYGVDSSHHYATLWTLPPDIDVRHPPKPTKSTLMTIAGDYRRFYLEVHEALVTKTFETSVKPHQVLLVEKIIEAAYKSSQSSTSIPLSE.

Belongs to the Gfo/Idh/MocA family.

This is an uncharacterized protein from Schizosaccharomyces pombe (strain 972 / ATCC 24843) (Fission yeast).